The chain runs to 355 residues: MDAHLVQAKKTSTASELSDSSLTFPFIGDYLSSPSLTTSDYVSDCSNLTVEGPVPANQEFSSSDESSVYISSALRLADYAFTPDDNIRIKPDAVIVICTQCQHQIQDKFFLSIDGRNYHENCLQCSTCENPLSNKCFYKDKTFYCKGCYFRTHVTSTASSCRELGPKCASCDRTIQATDWVRRARNYVYHLACFSCNQCKRQLSTGEEYALQEGNLLCKQHFLELVEGDSGVSSQKAKTKRVRTTFAEDQLSVLQTYFNRDSNPDGADLEKIASMTGLSKRVTQVWFQNSRARQKKWHQKSEGDNGDSQRSSVGPSSPSQKSDSSSEMMYPTSVTTSVEDAIPDSIVILGSLQFD.

LIM zinc-binding domains lie at 96–155 and 166–228; these read VICT…THVT and PKCA…LVEG. Residues 239-298 constitute a DNA-binding region (homeobox); the sequence is TKRVRTTFAEDQLSVLQTYFNRDSNPDGADLEKIASMTGLSKRVTQVWFQNSRARQKKWH. The segment at 291-336 is disordered; sequence RARQKKWHQKSEGDNGDSQRSSVGPSSPSQKSDSSSEMMYPTSVTT. Residues 306–326 are compositionally biased toward low complexity; the sequence is GDSQRSSVGPSSPSQKSDSSS.

As to quaternary structure, interacts with transcription factor sox-2. As to expression, expressed in the AWB sensory neurons and in one RME motor neuron (RMEV), two RMD motor neurons (RMDL and RMDR), the RID, RIV, SAA and SIA interneurons and the SMB sensory/inter/motor neurons.

It localises to the nucleus. Transcription factor that binds to the promoter of target genes. Regulates genes involved in serotonin synthesis and release in serotonergic ADF neurons. Involved in specification of neuron cell fate, olfactory receptor expression, locomotion, and foraging behavior. Required in AWB olfactory neurons to repress AWC cell fate and promote the AWB cell fate during early development. Cooperates with additional factors to direct the differentiation of the olfactory neurons, functioning with the transcription factor sox-2 to suppress AWC terminal differentiation and promote AWB neuron differentiation. Involved in regulating terminal specification and maintenance of the SMB sensory/inter/motor neurons. Plays a role in regulation of RID motor neuron differentiation, but is dispensable for motor axon outgrowth in the dorsal nerve cord. May regulate its own expression. The sequence is that of LIM/homeobox protein lim-4 from Caenorhabditis elegans.